The chain runs to 732 residues: Polyphosphate kinase (732 aa).

ATP is bound at residue Asn61. Positions 417 and 447 each coordinate Mg(2+). Catalysis depends on His477, which acts as the Phosphohistidine intermediate. Positions 510, 606, and 634 each coordinate ATP. The interval 699 to 718 is disordered; that stretch reads DGTYRQRQPAPGEAERGTHS.

Belongs to the polyphosphate kinase 1 (PPK1) family. It depends on Mg(2+) as a cofactor. An intermediate of this reaction is the autophosphorylated ppk in which a phosphate is covalently linked to a histidine residue through a N-P bond.

It carries out the reaction [phosphate](n) + ATP = [phosphate](n+1) + ADP. In terms of biological role, catalyzes the reversible transfer of the terminal phosphate of ATP to form a long-chain polyphosphate (polyP). The protein is Polyphosphate kinase of Thermosynechococcus vestitus (strain NIES-2133 / IAM M-273 / BP-1).